The sequence spans 429 residues: Enolase (429 aa).

Glutamine 169 is a (2R)-2-phosphoglycerate binding site. The active-site Proton donor is glutamate 211. The Mg(2+) site is built by aspartate 248, glutamate 289, and aspartate 316. (2R)-2-phosphoglycerate-binding residues include lysine 341, arginine 370, serine 371, and lysine 392. The active-site Proton acceptor is lysine 341.

The protein belongs to the enolase family. Mg(2+) is required as a cofactor.

It is found in the cytoplasm. It localises to the secreted. The protein resides in the cell surface. The enzyme catalyses (2R)-2-phosphoglycerate = phosphoenolpyruvate + H2O. The protein operates within carbohydrate degradation; glycolysis; pyruvate from D-glyceraldehyde 3-phosphate: step 4/5. Functionally, catalyzes the reversible conversion of 2-phosphoglycerate (2-PG) into phosphoenolpyruvate (PEP). It is essential for the degradation of carbohydrates via glycolysis. The chain is Enolase from Anaplasma phagocytophilum (strain HZ).